We begin with the raw amino-acid sequence, 331 residues long: Tryptophan--tRNA ligase (331 aa).

Residues 10 to 12 (QPS) and 18 to 19 (GN) contribute to the ATP site. The 'HIGH' region motif lies at 11–19 (PSGQLTLGN). Position 133 (Asp133) interacts with L-tryptophan. ATP contacts are provided by residues 145–147 (GED), Val184, and 193–197 (KMSKS). Residues 193-197 (KMSKS) carry the 'KMSKS' region motif.

This sequence belongs to the class-I aminoacyl-tRNA synthetase family. In terms of assembly, homodimer.

It localises to the cytoplasm. The enzyme catalyses tRNA(Trp) + L-tryptophan + ATP = L-tryptophyl-tRNA(Trp) + AMP + diphosphate + H(+). Catalyzes the attachment of tryptophan to tRNA(Trp). This chain is Tryptophan--tRNA ligase, found in Listeria monocytogenes serovar 1/2a (strain ATCC BAA-679 / EGD-e).